The chain runs to 61 residues: Bacteriocin sakacin-P (61 aa).

Positions 1-18 (MEKFIELSLKEVTAITGG) are excised as a propeptide. A disulfide bridge connects residues cysteine 27 and cysteine 32.

The protein belongs to the bacteriocin class IIA/YGNGV family.

The protein localises to the secreted. Bactericidal activity; inhibits closely related Lactobacilli, Listeria monocytogenes and ivanovvi, Enterococcus faecalis, Carnobacterium sp and Brocothrix thermosphacta. This is Bacteriocin sakacin-P (sakP) from Latilactobacillus sakei (Lactobacillus sakei).